Reading from the N-terminus, the 465-residue chain is Cysteine--tRNA ligase (465 aa).

Cysteine 30 contacts Zn(2+). Residues 32–42 (PTVYDRAHLGN) carry the 'HIGH' region motif. Zn(2+) contacts are provided by cysteine 213, histidine 238, and glutamate 242. A 'KMSKS' region motif is present at residues 271 to 275 (KMSKS). Lysine 274 serves as a coordination point for ATP.

This sequence belongs to the class-I aminoacyl-tRNA synthetase family. As to quaternary structure, monomer. Zn(2+) serves as cofactor.

The protein resides in the cytoplasm. It catalyses the reaction tRNA(Cys) + L-cysteine + ATP = L-cysteinyl-tRNA(Cys) + AMP + diphosphate. The sequence is that of Cysteine--tRNA ligase from Ruegeria pomeroyi (strain ATCC 700808 / DSM 15171 / DSS-3) (Silicibacter pomeroyi).